The sequence spans 189 residues: uncharacterized protein (189 aa).

The N-terminal stretch at 1 to 20 (MKFSTVGFLFSTILFKSAFA) is a signal peptide. The region spanning 74-109 (KKNEVLVDVLKKCDPSGNRRITLDEFLAFRKNGGEL) is the EF-hand domain. Ca(2+)-binding residues include Asp-87, Ser-89, Asn-91, Arg-93, and Glu-98.

The protein localises to the endoplasmic reticulum lumen. The protein resides in the golgi apparatus lumen. This is an uncharacterized protein from Schizosaccharomyces pombe (strain 972 / ATCC 24843) (Fission yeast).